Here is a 344-residue protein sequence, read N- to C-terminus: MKGCKYGTHRVIEPKGSLPQPALKISNDMNIFSNEILIDVQALNVDSASFTQIEEEAGHDTKKIAAKILEIVGERGKMQNPVTGSGGMLIGTIEKIGEDLEGKIDLKVGDKIATLVSLSLTPLQIDEIIDIKPDIDRVEIKGKAILFESGIYAKLPTDMSETLALAALDVAGAPAQTAKLVKPGDSVLILGAAGKSGMMCCYEAKKRVGPTGRVVGLVRNEKSKAKLLEMGIVDDVIIASAQLPVEVLETSLAANNGNEYDISINCVNVENTEMSSILPIRNGGTVYFFSMATSFTKAALGAEGVGKDVDMIIGNGYTKGHAEITLQILRESEIVRTTFEKMYL.

Belongs to the KDD family. As to quaternary structure, homodimer.

The enzyme catalyses (3S,5S)-3,5-diaminohexanoate + NAD(+) + H2O = (5S)-5-amino-3-oxohexanoate + NH4(+) + NADH + H(+). It participates in amino-acid degradation; L-lysine degradation via acetate pathway. Functionally, involved in the anaerobic fermentation of lysine. Catalyzes the oxidative deamination of L-erythro-3,5-diaminohexanoate (3,5-DAH) to 3-keto-5-aminohexanoate (KAH). In Acetoanaerobium sticklandii (strain ATCC 12662 / DSM 519 / JCM 1433 / CCUG 9281 / NCIMB 10654 / HF) (Clostridium sticklandii), this protein is L-erythro-3,5-diaminohexanoate dehydrogenase.